The following is a 321-amino-acid chain: MQNTNTLNWINKLIYLSISIPIFFLILVTTYPNSVEAYPVFAQQAYKSPREATGRIVCANCHLAKKTVDIEVPQAVLPNTVFEAVVKIPYDMQLKQVLANGKKGNLNVAAVLILPEGFELAPPDRISPDIKEKIGNLSFQSYSPDQKNILVVGPVPGKKYSEITFPILSPDPSINKQTNFLKYPIYVGGNRGRGQIYLDGSKSNNTIYSSSAEGQVVKIIRKEKGGYEIFIDTIDGRKITDIIPPGPEIIVSEGEFVKVDQPLTNNPNVGGFGQANTEIVLQNPLRMEGLILFFISVILAQVFLVLKKKQFEKVQIAEMNF.

A signal peptide spans 1 to 35 (MQNTNTLNWINKLIYLSISIPIFFLILVTTYPNSV). Heme is bound by residues Y38, C58, C61, and H62. A helical membrane pass occupies residues 287 to 307 (MEGLILFFISVILAQVFLVLK).

This sequence belongs to the cytochrome f family. In terms of assembly, the 4 large subunits of the cytochrome b6-f complex are cytochrome b6, subunit IV (17 kDa polypeptide, petD), cytochrome f and the Rieske protein, while the 4 small subunits are PetG, PetL, PetM and PetN. The complex functions as a dimer. Heme is required as a cofactor.

The protein localises to the plastid. Its subcellular location is the chloroplast thylakoid membrane. Its function is as follows. Component of the cytochrome b6-f complex, which mediates electron transfer between photosystem II (PSII) and photosystem I (PSI), cyclic electron flow around PSI, and state transitions. In Chara vulgaris (Common stonewort), this protein is Cytochrome f.